The primary structure comprises 181 residues: Large ribosomal subunit protein uL5 (181 aa).

The protein belongs to the universal ribosomal protein uL5 family. Part of the 50S ribosomal subunit; part of the 5S rRNA/L5/L18/L25 subcomplex. Contacts the 5S rRNA and the P site tRNA. Forms a bridge to the 30S subunit in the 70S ribosome.

In terms of biological role, this is one of the proteins that bind and probably mediate the attachment of the 5S RNA into the large ribosomal subunit, where it forms part of the central protuberance. In the 70S ribosome it contacts protein S13 of the 30S subunit (bridge B1b), connecting the 2 subunits; this bridge is implicated in subunit movement. Contacts the P site tRNA; the 5S rRNA and some of its associated proteins might help stabilize positioning of ribosome-bound tRNAs. This Campylobacter hominis (strain ATCC BAA-381 / DSM 21671 / CCUG 45161 / LMG 19568 / NCTC 13146 / CH001A) protein is Large ribosomal subunit protein uL5.